The chain runs to 447 residues: Signal recognition particle 54 kDa protein (447 aa).

GTP-binding positions include 103 to 110 (GVQGSGKT), 185 to 189 (DTAGR), and 245 to 248 (TKMD).

The protein belongs to the GTP-binding SRP family. SRP54 subfamily. In terms of assembly, part of the signal recognition particle protein translocation system, which is composed of SRP and FtsY. Archaeal SRP consists of a 7S RNA molecule of 300 nucleotides and two protein subunits: SRP54 and SRP19.

The protein resides in the cytoplasm. The enzyme catalyses GTP + H2O = GDP + phosphate + H(+). Involved in targeting and insertion of nascent membrane proteins into the cytoplasmic membrane. Binds to the hydrophobic signal sequence of the ribosome-nascent chain (RNC) as it emerges from the ribosomes. The SRP-RNC complex is then targeted to the cytoplasmic membrane where it interacts with the SRP receptor FtsY. In Saccharolobus solfataricus (strain ATCC 35092 / DSM 1617 / JCM 11322 / P2) (Sulfolobus solfataricus), this protein is Signal recognition particle 54 kDa protein.